A 113-amino-acid polypeptide reads, in one-letter code: Large ribosomal subunit protein uL22 (113 aa).

Belongs to the universal ribosomal protein uL22 family. In terms of assembly, part of the 50S ribosomal subunit.

This protein binds specifically to 23S rRNA; its binding is stimulated by other ribosomal proteins, e.g. L4, L17, and L20. It is important during the early stages of 50S assembly. It makes multiple contacts with different domains of the 23S rRNA in the assembled 50S subunit and ribosome. Functionally, the globular domain of the protein is located near the polypeptide exit tunnel on the outside of the subunit, while an extended beta-hairpin is found that lines the wall of the exit tunnel in the center of the 70S ribosome. The chain is Large ribosomal subunit protein uL22 from Geobacillus sp. (strain WCH70).